The chain runs to 54 residues: UPF0391 membrane protein Pnap_0920 (54 aa).

The next 2 membrane-spanning stretches (helical) occupy residues 6 to 26 and 30 to 50; these read VVFLVIALIAAVFGFGGIAAG and IAKILFFLFAIMAIVSFVVSL.

The protein belongs to the UPF0391 family.

It localises to the cell membrane. In Polaromonas naphthalenivorans (strain CJ2), this protein is UPF0391 membrane protein Pnap_0920.